A 41-amino-acid chain; its full sequence is NKTNLKQLKAEAARKKAXMQDMXTSVKVEPLXAXXNGAXRM.

Its function is as follows. Inhibits trypsin and the toxin proteases PR1 and PR2 of M.anisopliae. Does not inhibit chymotrypsin, subtilisin Carlsberg, proteinase K and porcine pancreatic elastase. This Galleria mellonella (Greater wax moth) protein is Inducible serine protease inhibitor 3.